A 347-amino-acid chain; its full sequence is Protein RecA (347 aa).

Residue G65–T72 coordinates ATP. The segment covering K327–E336 has biased composition (basic and acidic residues). The disordered stretch occupies residues K327 to M347. A compositionally biased stretch (acidic residues) spans E337–M347.

It belongs to the RecA family.

The protein resides in the cytoplasm. Can catalyze the hydrolysis of ATP in the presence of single-stranded DNA, the ATP-dependent uptake of single-stranded DNA by duplex DNA, and the ATP-dependent hybridization of homologous single-stranded DNAs. It interacts with LexA causing its activation and leading to its autocatalytic cleavage. This is Protein RecA from Xylella fastidiosa (strain 9a5c).